Here is a 305-residue protein sequence, read N- to C-terminus: tRNA dimethylallyltransferase (305 aa).

ATP is bound at residue 15–22 (GPTASGKS). 17–22 (TASGKS) contacts substrate. Interaction with substrate tRNA stretches follow at residues 40-43 (DSMQ) and 164-168 (QRIVR).

This sequence belongs to the IPP transferase family. As to quaternary structure, monomer. The cofactor is Mg(2+).

The catalysed reaction is adenosine(37) in tRNA + dimethylallyl diphosphate = N(6)-dimethylallyladenosine(37) in tRNA + diphosphate. Functionally, catalyzes the transfer of a dimethylallyl group onto the adenine at position 37 in tRNAs that read codons beginning with uridine, leading to the formation of N6-(dimethylallyl)adenosine (i(6)A). This chain is tRNA dimethylallyltransferase, found in Sinorhizobium medicae (strain WSM419) (Ensifer medicae).